The sequence spans 188 residues: Gamma-glutamylcyclotransferase (188 aa).

19-22 (YFAY) serves as a coordination point for substrate. The active-site Proton acceptor is E98. Residue S173 is modified to Phosphoserine.

This sequence belongs to the gamma-glutamylcyclotransferase family. As to quaternary structure, homodimer.

It catalyses the reaction an alpha-(gamma-L-glutamyl)-L-amino acid = 5-oxo-L-proline + an L-alpha-amino acid. Catalyzes the formation of 5-oxoproline from gamma-glutamyl dipeptides and may play a significant role in glutathione homeostasis. Induces release of cytochrome c from mitochondria with resultant induction of apoptosis. The sequence is that of Gamma-glutamylcyclotransferase (GGCT) from Bos taurus (Bovine).